The following is a 154-amino-acid chain: D-aminoacyl-tRNA deacylase (154 aa).

The short motif at 142–143 (GP) is the Gly-cisPro motif, important for rejection of L-amino acids element.

Belongs to the DTD family. In terms of assembly, homodimer.

The protein localises to the cytoplasm. It carries out the reaction glycyl-tRNA(Ala) + H2O = tRNA(Ala) + glycine + H(+). The catalysed reaction is a D-aminoacyl-tRNA + H2O = a tRNA + a D-alpha-amino acid + H(+). Its function is as follows. An aminoacyl-tRNA editing enzyme that deacylates mischarged D-aminoacyl-tRNAs. Also deacylates mischarged glycyl-tRNA(Ala), protecting cells against glycine mischarging by AlaRS. Acts via tRNA-based rather than protein-based catalysis; rejects L-amino acids rather than detecting D-amino acids in the active site. By recycling D-aminoacyl-tRNA to D-amino acids and free tRNA molecules, this enzyme counteracts the toxicity associated with the formation of D-aminoacyl-tRNA entities in vivo and helps enforce protein L-homochirality. The protein is D-aminoacyl-tRNA deacylase of Acidovorax sp. (strain JS42).